The sequence spans 283 residues: Protein MGARP (283 aa).

The tract at residues 1 to 36 (MYLRRAVSKTLALPRRAPPGPAPLGKDASLRRMSSR) is disordered. Residues 1–41 (MYLRRAVSKTLALPRRAPPGPAPLGKDASLRRMSSRKFPGT) lie on the Cytoplasmic side of the membrane. The chain crosses the membrane as a helical; Anchor for type IV membrane protein span at residues 42 to 64 (SGSNMIYYLVVGVTVSAGGYYTY). Topologically, residues 65 to 283 (KALTSKQVRR…VTEETASPQG (219 aa)) are mitochondrial intermembrane. Disordered regions lie at residues 78-101 (VAEP…EHVA) and 118-283 (AESV…SPQG). The span at 128-160 (EAAVVLPEESQASAPSEVPAEAAVVEASLSSSE) shows a compositional bias: low complexity. Polar residues-rich tracts occupy residues 171-184 (VETT…TQEV) and 199-220 (ADTS…QEGA). The span at 221–245 (DTTKEEADNSKEAEGTTTEDPRSIS) shows a compositional bias: basic and acidic residues.

As to quaternary structure, interacts with RHOT1/Miro-1, RHOT2/Miro-2, TRAK1/OIP106 and TRAK2/GRIF1. Expressed in the ovary, testis, brain, adrenal glands and the compartments of the visual nervous system. Expressed in corneal endothelium (CE) (at protein level). Expressed in steroidogenic tissues with the highest level of expression observed in the adrenal gland. Weakly expressed in placenta. Weakly expressed in astrocytes and neurons under normoxia. Strongly expressed in astrocytes and neurons under hypoxia. Expressed in each layer of the retina, with particularly higher staining in the inner segment of the photoreceptor (IS), the outer plexiform layer (OPL) and the ganglion cell layer (GCL).

It is found in the mitochondrion. Its subcellular location is the mitochondrion outer membrane. The protein localises to the mitochondrion inner membrane. Plays a role in the trafficking of mitochondria along microtubules. Regulates the kinesin-mediated axonal transport of mitochondria to nerve terminals along microtubules during hypoxia. Participates in the translocation of TRAK2/GRIF1 from the cytoplasm to the mitochondrion. Also plays a role in steroidogenesis through maintenance of mitochondrial abundance and morphology. Plays an inhibitory role during neocortex development by regulating mitochondrial morphology, distribution and motility in neocortical neurons. The polypeptide is Protein MGARP (Mgarp) (Mus musculus (Mouse)).